The chain runs to 543 residues: Autophagy-related protein 18 (543 aa).

The tract at residues 163–200 (AYPSPPKLPNRQETSTKGTTNDNDRSHLENIPENVNAN) is disordered. Residues 173–183 (RQETSTKGTTN) are compositionally biased toward polar residues. WD repeat units follow at residues 225-265 (AHKA…KLYQ) and 270-309 (TYPT…ANNT). The short motif at 266–270 (FRRGT) is the L/FRRG motif element. Positions 326–336 (KQSMKQXQGSK) are enriched in polar residues. Residues 326–408 (KQSMKQXQGS…ESIGDKIEPH (83 aa)) form a disordered region. Positions 343-372 (SDSDPDVDELVENDNSDDDELEEDIDDELA) are enriched in acidic residues. Positions 377-400 (NSSLTVPRRVSSTTSLGSYGSQES) are enriched in polar residues.

This sequence belongs to the WD repeat PROPPIN family. In terms of assembly, component of the PI(3,5)P2 regulatory complex.

It is found in the preautophagosomal structure membrane. The protein resides in the vacuole membrane. It localises to the endosome membrane. Its function is as follows. The PI(3,5)P2 regulatory complex regulates both the synthesis and turnover of phosphatidylinositol 3,5-bisphosphate (PtdIns(3,5)P2). Necessary for proper vacuole morphology. Plays an important role in osmotically-induced vacuole fragmentation. Involved in correct ATG9 trafficking to the pre-autophagosomal structure. Might also be involved in premeiotic DNA replication. Required for cytoplasm to vacuole transport (Cvt) vesicle formation, autophagy, glucose-induced micropexophagy and ethanol-induced macropexophagy. Required for the involution of the vacuole that occurs during micropexophagy. Involved in the recruitment of ATG2 to punctate structures when cells are grown on glucose. The sequence is that of Autophagy-related protein 18 (ATG18) from Komagataella pastoris (Yeast).